The chain runs to 738 residues: MVAEEDIEKQVLQLIDSFFLKTTLLICSTESSRYQSSTENIFLFDDTWFEDHSELVSELPEIISKWSHYDGRKELPPLVVETYLDLRQLNSSHLVRLKDHEGHLWNVCKGTKKQEIVMERWLIELDNSSPTFKSYSEDETDVNELSKQLVLLFRYLLTLIQLLPTTELYQLLIKSYNGPQNEGSSNPITSTGPLVSIRTCVLDGSKPILSKGRIGLSKPIINTYSNALNESNLPAHLDQKKITPVWTKFGLLRVSVSYRRDWKFEINNTNDELFSARHASVSHNSQGPQNQPEQEGQSDQDIGKRQPQFQQQQQPQQQQQQQQQQQRQHQVQTQQQRQIPDRRSLSLSPCTRANSFEPQSWQKKVYPISRPVQPFKVGSIGSQSASRNPSNSSFFNQPPVHRPSMSSNYGPQMNIEGTSVGSTSKYSSSFGNIRRHSSVKTTENAEKVSKAVKSPLQPQESQEDLMDFVKLLEEKPDLTIKKTSGNNPPNINISDSLIRYQNLKPSNDLLSEDLSVSLSMDPNHTYHRGRSDSHSPLPSISPSMHYGSLNSRMSQGANASHLIARGGGNSSTSAFNSRRNSLDKSSNKQGMSGLPPIFGGESTSYHHDNKIQKYNQLGVEEDDDDEDDRLLNQMGNSATKFKSSISPRSIDSISSSFIKSRIPIRQPYHYSQPTTAPFQAQAKFHKPANKLIDNGNRSNSNNNNHNGNDAVGVMHNDEDDQDDDLVFFMSDMNLSKEG.

Disordered stretches follow at residues 279–359 (ASVS…FEPQ) and 377–462 (VGSI…QESQ). Low complexity-rich tracts occupy residues 284 to 297 (NSQG…QEGQ) and 306 to 338 (QPQF…QQRQ). Residue Ser-344 is modified to Phosphoserine; by PKA. Polar residues predominate over residues 345–359 (LSLSPCTRANSFEPQ). Ser-348 is modified (phosphoserine; by TORC1). Position 355 is a phosphoserine (Ser-355). 2 stretches are compositionally biased toward low complexity: residues 382-399 (SQSA…NQPP) and 417-429 (GTSV…YSSS). Residues 432–520 (NIRRHSSVKT…SEDLSVSLSM (89 aa)) form an interaction with ATG1 region. Phosphoserine; by TORC1 and PKA is present on Ser-437. Phosphoserine; by TORC1 is present on Ser-438. Phosphoserine is present on residues Ser-461 and Ser-496. Residues 521-605 (DPNHTYHRGR…PIFGGESTSY (85 aa)) form a disordered region. Polar residues-rich tracts occupy residues 534-558 (HSPL…QGAN) and 570-579 (SSTSAFNSRR). A phosphoserine; by TORC1 mark is found at Ser-535 and Ser-541. Position 554 is a phosphoserine (Ser-554). A Phosphoserine; by PKA modification is found at Ser-581. Residues Ser-646 and Ser-649 each carry the phosphoserine; by TORC1 modification. Residues 690-719 (KLIDNGNRSNSNNNNHNGNDAVGVMHNDED) form a disordered region. Positions 694-708 (NGNRSNSNNNNHNGN) are enriched in low complexity.

Belongs to the ATG13 family. Fungi subfamily. In terms of assembly, hypophosphorylated form interacts with ATG1 to form the ATG1-ATG13 kinase complex. The ATG1-ATG13 complex interacts with the ATG17-ATG29-ATG31 complex through direct interaction with ATG17. Interacts with VAC8. In terms of processing, phosphorylated; hyperphosphorylated by the TORC1 kinase complex to repress the induction of autophagy. Starvation and TOR inactivation results in ATG13 partial dephosphorylation leading to ATG1-binding. Rephosphorylated by ATG1 during prolonged nitrogen starvation. Also phosphorylated by TPK1; TPK1 phosphorylation regulates the association of ATG13 with the PAS. Within this regulatory network, mitochondrial respiratory deficiency suppresses autophagic flux. Hyperphosphorylation in rich medium is impaired in the absence of VAC8.

Its subcellular location is the cytoplasm. It localises to the preautophagosomal structure. Activates the ATG1 kinase in a nutritional condition dependent manner through the TOR pathway, leading to autophagy. Required for autophosphorylation of ATG1 at 'Thr-226' and its dimerization. May also be involved in the regulation of autophagy through SNF1. Involved in ATG9 and ATG23 cycling through the pre-autophagosomal structure. Also involved in cytoplasm to vacuole transport (Cvt) and more specifically in Cvt vesicle formation. Seems to play a role in the switching machinery regulating the conversion between the Cvt pathway and autophagy. Finally, ATG13 is also required for glycogen storage during stationary phase. In Saccharomyces cerevisiae (strain YJM789) (Baker's yeast), this protein is Autophagy-related protein 13 (ATG13).